The chain runs to 268 residues: Tryptophan synthase alpha chain (268 aa).

Residues Glu-49 and Asp-60 each act as proton acceptor in the active site.

The protein belongs to the TrpA family. Tetramer of two alpha and two beta chains.

The catalysed reaction is (1S,2R)-1-C-(indol-3-yl)glycerol 3-phosphate + L-serine = D-glyceraldehyde 3-phosphate + L-tryptophan + H2O. It participates in amino-acid biosynthesis; L-tryptophan biosynthesis; L-tryptophan from chorismate: step 5/5. In terms of biological role, the alpha subunit is responsible for the aldol cleavage of indoleglycerol phosphate to indole and glyceraldehyde 3-phosphate. This Mannheimia succiniciproducens (strain KCTC 0769BP / MBEL55E) protein is Tryptophan synthase alpha chain.